A 251-amino-acid polypeptide reads, in one-letter code: 3-deoxy-manno-octulosonate cytidylyltransferase (251 aa).

This sequence belongs to the KdsB family.

It is found in the cytoplasm. It catalyses the reaction 3-deoxy-alpha-D-manno-oct-2-ulosonate + CTP = CMP-3-deoxy-beta-D-manno-octulosonate + diphosphate. Its pathway is nucleotide-sugar biosynthesis; CMP-3-deoxy-D-manno-octulosonate biosynthesis; CMP-3-deoxy-D-manno-octulosonate from 3-deoxy-D-manno-octulosonate and CTP: step 1/1. It functions in the pathway bacterial outer membrane biogenesis; lipopolysaccharide biosynthesis. Functionally, activates KDO (a required 8-carbon sugar) for incorporation into bacterial lipopolysaccharide in Gram-negative bacteria. The polypeptide is 3-deoxy-manno-octulosonate cytidylyltransferase (Sodalis glossinidius (strain morsitans)).